The chain runs to 68 residues: U-reduvitoxin-Pr3a (68 aa).

A signal peptide spans 1–22 (MKAGMKLVLVLVIASIALLALA). 3 disulfides stabilise this stretch: Cys-29–Cys-47, Cys-36–Cys-52, and Cys-46–Cys-59.

The protein belongs to the venom Ptu1-like knottin family. In terms of tissue distribution, expressed by the venom gland.

It localises to the secreted. In terms of biological role, binds reversibly and blocks P/Q-type voltage-gated calcium channels (Cav). In Platymeris rhadamanthus (Red spot assassin bug), this protein is U-reduvitoxin-Pr3a.